The sequence spans 132 residues: Histone H2B.9 (132 aa).

Residues 1 to 11 (MAPKAEKKPAE) show a composition bias toward basic and acidic residues. The segment at 1 to 41 (MAPKAEKKPAEKAPAPKAEKKIAKEGGTSEIVKKKKKTKKS) is disordered. N,N,N-trimethylalanine; alternate is present on Ala2. Ala2 bears the N,N-dimethylalanine; alternate mark. Ala2 is modified (N-methylalanine; alternate). Residue Lys4 is modified to N6-methyllysine. N6-acetyllysine is present on residues Lys7, Lys12, Lys20, and Lys21. Lys128 is covalently cross-linked (Glycyl lysine isopeptide (Lys-Gly) (interchain with G-Cter in ubiquitin)).

Belongs to the histone H2B family. As to quaternary structure, the nucleosome is a histone octamer containing two molecules each of H2A, H2B, H3 and H4 assembled in one H3-H4 heterotetramer and two H2A-H2B heterodimers. The octamer wraps approximately 147 bp of DNA. Can be acetylated to form H2BK6ac, H2BK33ac and H2BK34ac. In terms of processing, monoubiquitinated by BRE1 to form H2BK143ub1 and deubiquitinated by UBP26. Required for heterochromatic histone H3 di- and trimethylation at H3K4me. May give a specific tag for epigenetic transcriptional activation.

Its subcellular location is the nucleus. The protein localises to the chromosome. Functionally, core component of nucleosome. Nucleosomes wrap and compact DNA into chromatin, limiting DNA accessibility to the cellular machineries which require DNA as a template. Histones thereby play a central role in transcription regulation, DNA repair, DNA replication and chromosomal stability. DNA accessibility is regulated via a complex set of post-translational modifications of histones, also called histone code, and nucleosome remodeling. The polypeptide is Histone H2B.9 (Arabidopsis thaliana (Mouse-ear cress)).